The primary structure comprises 219 residues: ATP-dependent Clp protease proteolytic subunit 4 (219 aa).

The active-site Nucleophile is Ser125. His150 is a catalytic residue.

Belongs to the peptidase S14 family. As to quaternary structure, fourteen ClpP subunits assemble into 2 heptameric rings which stack back to back to give a disk-like structure with a central cavity, resembling the structure of eukaryotic proteasomes.

The protein resides in the cytoplasm. The enzyme catalyses Hydrolysis of proteins to small peptides in the presence of ATP and magnesium. alpha-casein is the usual test substrate. In the absence of ATP, only oligopeptides shorter than five residues are hydrolyzed (such as succinyl-Leu-Tyr-|-NHMec, and Leu-Tyr-Leu-|-Tyr-Trp, in which cleavage of the -Tyr-|-Leu- and -Tyr-|-Trp bonds also occurs).. Cleaves peptides in various proteins in a process that requires ATP hydrolysis. Has a chymotrypsin-like activity. Plays a major role in the degradation of misfolded proteins. The polypeptide is ATP-dependent Clp protease proteolytic subunit 4 (Prochlorococcus marinus (strain MIT 9312)).